The following is a 323-amino-acid chain: Ubiquinone biosynthesis protein COQ4, mitochondrial (323 aa).

Residues 1 to 29 (MLKSTVSNTRIKCCRIDQRRNYLFTALAS) constitute a mitochondrion transit peptide. Residues histidine 205, aspartate 206, histidine 209, and glutamate 221 each contribute to the Zn(2+) site.

The protein belongs to the COQ4 family. As to quaternary structure, component of a multi-subunit COQ enzyme complex, composed of at least COQ3, COQ4, COQ5, COQ6, COQ7 and COQ9. The cofactor is Zn(2+).

The protein localises to the mitochondrion inner membrane. It carries out the reaction a 4-hydroxy-3-methoxy-5-(all-trans-polyprenyl)benzoate + H(+) = a 2-methoxy-6-(all-trans-polyprenyl)phenol + CO2. It participates in cofactor biosynthesis; ubiquinone biosynthesis. Functionally, lyase that catalyzes the C1-decarboxylation of 4-hydroxy-3-methoxy-5-(all-trans-polyprenyl)benzoic acid into 2-methoxy-6-(all-trans-polyprenyl)phenol during ubiquinone biosynthesis. This is Ubiquinone biosynthesis protein COQ4, mitochondrial from Candida dubliniensis (strain CD36 / ATCC MYA-646 / CBS 7987 / NCPF 3949 / NRRL Y-17841) (Yeast).